A 659-amino-acid chain; its full sequence is UvrABC system protein B (659 aa).

One can recognise a Helicase ATP-binding domain in the interval 27–414; it reads EGLEQNKKSQ…AHGEIVKQII (388 aa). 40 to 47 contacts ATP; it reads GVTGSGKT. Positions 93–116 match the Beta-hairpin motif; sequence YFDYYRPEAYMPNTDTYIDKTTKS. The Helicase C-terminal domain maps to 432-594; the sequence is QVEDMFDEIQ…IIPKTIIKPI (163 aa). One can recognise a UVR domain in the interval 624 to 659; that stretch reads EALVKDLRNQMLDASKQLNFERAAELRDIILELEAN.

This sequence belongs to the UvrB family. As to quaternary structure, forms a heterotetramer with UvrA during the search for lesions. Interacts with UvrC in an incision complex.

It localises to the cytoplasm. Functionally, the UvrABC repair system catalyzes the recognition and processing of DNA lesions. A damage recognition complex composed of 2 UvrA and 2 UvrB subunits scans DNA for abnormalities. Upon binding of the UvrA(2)B(2) complex to a putative damaged site, the DNA wraps around one UvrB monomer. DNA wrap is dependent on ATP binding by UvrB and probably causes local melting of the DNA helix, facilitating insertion of UvrB beta-hairpin between the DNA strands. Then UvrB probes one DNA strand for the presence of a lesion. If a lesion is found the UvrA subunits dissociate and the UvrB-DNA preincision complex is formed. This complex is subsequently bound by UvrC and the second UvrB is released. If no lesion is found, the DNA wraps around the other UvrB subunit that will check the other stand for damage. This Mycoplasma mobile (strain ATCC 43663 / 163K / NCTC 11711) (Mesomycoplasma mobile) protein is UvrABC system protein B.